The following is a 213-amino-acid chain: Glycerol-3-phosphate acyltransferase (213 aa).

6 consecutive transmembrane segments (helical) span residues 3–23 (IIIL…GLWI), 48–68 (ILGV…GTLA), 71–91 (LPLI…LAVI), 119–139 (PFFL…FSMI), 144–164 (VVAA…GFIL), and 165–185 (TSYD…IIFR).

It belongs to the PlsY family. As to quaternary structure, probably interacts with PlsX.

The protein resides in the cell membrane. The enzyme catalyses an acyl phosphate + sn-glycerol 3-phosphate = a 1-acyl-sn-glycero-3-phosphate + phosphate. The protein operates within lipid metabolism; phospholipid metabolism. Its function is as follows. Catalyzes the transfer of an acyl group from acyl-phosphate (acyl-PO(4)) to glycerol-3-phosphate (G3P) to form lysophosphatidic acid (LPA). This enzyme utilizes acyl-phosphate as fatty acyl donor, but not acyl-CoA or acyl-ACP. The protein is Glycerol-3-phosphate acyltransferase of Lactococcus lactis subsp. cremoris (strain SK11).